A 403-amino-acid chain; its full sequence is Dihydroorotase (403 aa).

Residues His-48 and His-50 each coordinate Zn(2+). Substrate is bound by residues 50-52 (HLR) and Asn-82. Zn(2+)-binding residues include Glu-140, His-172, His-211, and Asp-277. Asp-277 is a catalytic residue. Residue His-281 participates in substrate binding.

The protein belongs to the metallo-dependent hydrolases superfamily. DHOase family. Class I DHOase subfamily. Zn(2+) is required as a cofactor.

The catalysed reaction is (S)-dihydroorotate + H2O = N-carbamoyl-L-aspartate + H(+). Its pathway is pyrimidine metabolism; UMP biosynthesis via de novo pathway; (S)-dihydroorotate from bicarbonate: step 3/3. Functionally, catalyzes the reversible cyclization of carbamoyl aspartate to dihydroorotate. In Archaeoglobus fulgidus (strain ATCC 49558 / DSM 4304 / JCM 9628 / NBRC 100126 / VC-16), this protein is Dihydroorotase.